Here is a 298-residue protein sequence, read N- to C-terminus: N-acetylmuramic acid 6-phosphate etherase (298 aa).

The 164-residue stretch at 55 to 218 (IHAQVSGGGR…STGLMIKSGK (164 aa)) folds into the SIS domain. Residue glutamate 83 is the Proton donor of the active site. Residue glutamate 114 is part of the active site.

This sequence belongs to the GCKR-like family. MurNAc-6-P etherase subfamily. In terms of assembly, homodimer.

It catalyses the reaction N-acetyl-D-muramate 6-phosphate + H2O = N-acetyl-D-glucosamine 6-phosphate + (R)-lactate. It functions in the pathway amino-sugar metabolism; 1,6-anhydro-N-acetylmuramate degradation. It participates in amino-sugar metabolism; N-acetylmuramate degradation. The protein operates within cell wall biogenesis; peptidoglycan recycling. In terms of biological role, specifically catalyzes the cleavage of the D-lactyl ether substituent of MurNAc 6-phosphate, producing GlcNAc 6-phosphate and D-lactate. Together with AnmK, is also required for the utilization of anhydro-N-acetylmuramic acid (anhMurNAc) either imported from the medium or derived from its own cell wall murein, and thus plays a role in cell wall recycling. This is N-acetylmuramic acid 6-phosphate etherase from Escherichia coli (strain SMS-3-5 / SECEC).